The primary structure comprises 464 residues: Trigger factor (464 aa).

One can recognise a PPIase FKBP-type domain in the interval 169 to 256; it reads GDVAIVDYRG…MKELKAKELP (88 aa).

This sequence belongs to the FKBP-type PPIase family. Tig subfamily.

The protein resides in the cytoplasm. It carries out the reaction [protein]-peptidylproline (omega=180) = [protein]-peptidylproline (omega=0). Functionally, involved in protein export. Acts as a chaperone by maintaining the newly synthesized protein in an open conformation. Functions as a peptidyl-prolyl cis-trans isomerase. In Microcystis aeruginosa (strain NIES-843 / IAM M-2473), this protein is Trigger factor.